The chain runs to 143 residues: Transcriptional regulator MraZ (143 aa).

SpoVT-AbrB domains lie at 5–47 and 76–119; these read EFRH…PMNE and ASEC…SQEK.

Belongs to the MraZ family. In terms of assembly, forms oligomers.

The protein localises to the cytoplasm. It localises to the nucleoid. The sequence is that of Transcriptional regulator MraZ from Natranaerobius thermophilus (strain ATCC BAA-1301 / DSM 18059 / JW/NM-WN-LF).